Reading from the N-terminus, the 230-residue chain is Ion-translocating oxidoreductase complex subunit E (230 aa).

5 consecutive transmembrane segments (helical) span residues 22-42 (LLGL…LGLG), 63-83 (TPAE…VSAV), 86-106 (LINA…PLIV), 125-145 (WLSA…MFVL), and 182-202 (PFLL…MLAV).

Belongs to the NqrDE/RnfAE family. The complex is composed of six subunits: RsxA, RsxB, RsxC, RsxD, RsxE and RsxG.

It localises to the cell inner membrane. Functionally, part of a membrane-bound complex that couples electron transfer with translocation of ions across the membrane. Required to maintain the reduced state of SoxR. In Salmonella paratyphi A (strain ATCC 9150 / SARB42), this protein is Ion-translocating oxidoreductase complex subunit E.